Consider the following 212-residue polypeptide: MSYTTQQIIEKLRELKIVPVIALDNADDILPLADTLAKNGLSVAEITFRSEAAADAIRLLRANRPDFLIAAGTVLTAEQVVLAKSSGADFVVTPGLNPKIVKLCQDLNFPITPGVNNPMAIEIALEMGISAVKFFPAEASGGVKMIKALLGPYAQLQIMPTGGIGLHNIRDYLAIPNIVACGGSWFVEKKLIQSNNWDEIGRLVREVIDIIK.

Glutamate 45 (proton acceptor) is an active-site residue. 3 residues coordinate pyruvate: arginine 49, threonine 73, and lysine 133. The active-site Schiff-base intermediate with substrate is lysine 133.

This sequence belongs to the KHG/KDPG aldolase family. Homotrimer.

Its subcellular location is the cytoplasm. It carries out the reaction 2-dehydro-3-deoxy-6-phospho-D-gluconate = D-glyceraldehyde 3-phosphate + pyruvate. Its pathway is carbohydrate acid metabolism; 2-dehydro-3-deoxy-D-gluconate degradation; D-glyceraldehyde 3-phosphate and pyruvate from 2-dehydro-3-deoxy-D-gluconate: step 2/2. In terms of biological role, involved in the degradation of glucose via the Entner-Doudoroff pathway. Catalyzes the reversible, stereospecific retro-aldol cleavage of 2-keto-3-deoxy-6-phosphogluconate (KDPG) to pyruvate and D-glyceraldehyde-3-phosphate. The polypeptide is 2-dehydro-3-deoxy-phosphogluconate aldolase (eda) (Haemophilus influenzae (strain ATCC 51907 / DSM 11121 / KW20 / Rd)).